The following is a 427-amino-acid chain: DEAD-box ATP-dependent RNA helicase 56 (427 aa).

The interval 1-30 (MGDARDNEAYEEELLDYEEEDEKVPDSGNK) is disordered. Positions 9-23 (AYEEELLDYEEEDEK) are enriched in acidic residues. The Q motif motif lies at 46–74 (SGFRDFLLKPELLRAIVDSGFEHPSEVQH). A Helicase ATP-binding domain is found at 77–250 (IPQAILGMDV…KKFMQDPMEI (174 aa)). An ATP-binding site is contributed by 90–97 (AKSGMGKT). A DECD box motif is present at residues 197–200 (DECD). The Helicase C-terminal domain maps to 278-423 (KLNDLLDALD…ELPEQIDTST (146 aa)).

The protein belongs to the DEAD box helicase family. DECD subfamily. Interacts with ALY2 and MOS11.

It localises to the nucleus. It carries out the reaction ATP + H2O = ADP + phosphate + H(+). In terms of biological role, ATP-dependent RNA helicase involved in pre-mRNA splicing. Required for the export of mRNA out of the nucleus. In addition to ssRNA and dsRNA, binds dsDNA, but not ssDNA. The chain is DEAD-box ATP-dependent RNA helicase 56 (RH56) from Arabidopsis thaliana (Mouse-ear cress).